A 410-amino-acid polypeptide reads, in one-letter code: Multifunctional CCA protein (410 aa).

Residues Gly-8 and Arg-11 each contribute to the ATP site. Residues Gly-8 and Arg-11 each coordinate CTP. The Mg(2+) site is built by Asp-21 and Asp-23. Positions 91, 137, and 140 each coordinate ATP. The CTP site is built by Arg-91, Arg-137, and Arg-140. The HD domain occupies 225-326 (SGIHTLMTLQ…LNVLKKTDAF (102 aa)).

Belongs to the tRNA nucleotidyltransferase/poly(A) polymerase family. Bacterial CCA-adding enzyme type 1 subfamily. As to quaternary structure, monomer. Can also form homodimers and oligomers. Mg(2+) is required as a cofactor. It depends on Ni(2+) as a cofactor.

It catalyses the reaction a tRNA precursor + 2 CTP + ATP = a tRNA with a 3' CCA end + 3 diphosphate. The catalysed reaction is a tRNA with a 3' CCA end + 2 CTP + ATP = a tRNA with a 3' CCACCA end + 3 diphosphate. Functionally, catalyzes the addition and repair of the essential 3'-terminal CCA sequence in tRNAs without using a nucleic acid template. Adds these three nucleotides in the order of C, C, and A to the tRNA nucleotide-73, using CTP and ATP as substrates and producing inorganic pyrophosphate. tRNA 3'-terminal CCA addition is required both for tRNA processing and repair. Also involved in tRNA surveillance by mediating tandem CCA addition to generate a CCACCA at the 3' terminus of unstable tRNAs. While stable tRNAs receive only 3'-terminal CCA, unstable tRNAs are marked with CCACCA and rapidly degraded. In Neisseria gonorrhoeae (strain ATCC 700825 / FA 1090), this protein is Multifunctional CCA protein.